Consider the following 193-residue polypeptide: Ribonuclease HII (193 aa).

The region spanning 15–193 (YIVAGVDEAG…SYHRRSFKSC (179 aa)) is the RNase H type-2 domain. A divalent metal cation is bound by residues Asp21, Glu22, and Asp112.

The protein belongs to the RNase HII family. Mn(2+) is required as a cofactor. The cofactor is Mg(2+).

The protein resides in the cytoplasm. The catalysed reaction is Endonucleolytic cleavage to 5'-phosphomonoester.. Functionally, endonuclease that specifically degrades the RNA of RNA-DNA hybrids. In Rickettsia prowazekii (strain Madrid E), this protein is Ribonuclease HII (rnhB).